The primary structure comprises 82 residues: MNPLICAASVVGAGLAIGLGAIGPGIGQGTAAGQAVEGIARQPEAEGKIRGTLLLSLAFMEALTIYGLVVALALMFANPFVS.

The next 2 membrane-spanning stretches (helical) occupy residues 3 to 23 (PLIC…GAIG) and 57 to 77 (LAFM…LMFA).

It belongs to the ATPase C chain family. In terms of assembly, F-type ATPases have 2 components, F(1) - the catalytic core - and F(0) - the membrane proton channel. F(1) has five subunits: alpha(3), beta(3), gamma(1), delta(1), epsilon(1). F(0) has four main subunits: a(1), b(1), b'(1) and c(10-14). The alpha and beta chains form an alternating ring which encloses part of the gamma chain. F(1) is attached to F(0) by a central stalk formed by the gamma and epsilon chains, while a peripheral stalk is formed by the delta, b and b' chains.

It is found in the plastid. Its subcellular location is the chloroplast thylakoid membrane. In terms of biological role, f(1)F(0) ATP synthase produces ATP from ADP in the presence of a proton or sodium gradient. F-type ATPases consist of two structural domains, F(1) containing the extramembraneous catalytic core and F(0) containing the membrane proton channel, linked together by a central stalk and a peripheral stalk. During catalysis, ATP synthesis in the catalytic domain of F(1) is coupled via a rotary mechanism of the central stalk subunits to proton translocation. Functionally, key component of the F(0) channel; it plays a direct role in translocation across the membrane. A homomeric c-ring of between 10-14 subunits forms the central stalk rotor element with the F(1) delta and epsilon subunits. This chain is ATP synthase subunit c, chloroplastic, found in Ostreococcus tauri.